The primary structure comprises 366 residues: 1-deoxy-D-xylulose 5-phosphate reductoisomerase (366 aa).

Thr-7, Gly-8, Ser-9, Ile-10, Gly-31, Lys-32, Asn-33, and Asn-113 together coordinate NADPH. Residue Lys-114 participates in 1-deoxy-D-xylulose 5-phosphate binding. Glu-115 lines the NADPH pocket. A Mn(2+)-binding site is contributed by Asp-133. 1-deoxy-D-xylulose 5-phosphate-binding residues include Ser-134, Glu-135, Ser-158, and His-181. Residue Glu-135 participates in Mn(2+) binding. Gly-187 serves as a coordination point for NADPH. Positions 194, 199, 200, and 203 each coordinate 1-deoxy-D-xylulose 5-phosphate. Position 203 (Glu-203) interacts with Mn(2+).

It belongs to the DXR family. Mg(2+) is required as a cofactor. It depends on Mn(2+) as a cofactor.

The catalysed reaction is 2-C-methyl-D-erythritol 4-phosphate + NADP(+) = 1-deoxy-D-xylulose 5-phosphate + NADPH + H(+). It functions in the pathway isoprenoid biosynthesis; isopentenyl diphosphate biosynthesis via DXP pathway; isopentenyl diphosphate from 1-deoxy-D-xylulose 5-phosphate: step 1/6. Its function is as follows. Catalyzes the NADPH-dependent rearrangement and reduction of 1-deoxy-D-xylulose-5-phosphate (DXP) to 2-C-methyl-D-erythritol 4-phosphate (MEP). The sequence is that of 1-deoxy-D-xylulose 5-phosphate reductoisomerase from Helicobacter pylori (strain G27).